Here is a 65-residue protein sequence, read N- to C-terminus: MLFKSLNQLFNSSLSSMNSSSVVNSSSTLNVSFDLNSIQGTNKYYNSIFTRPQMYQCLKHIYINI.

This is an uncharacterized protein from Dictyostelium discoideum (Social amoeba).